The sequence spans 286 residues: Elongation factor Ts (286 aa).

Residues 82–85 are involved in Mg(2+) ion dislocation from EF-Tu; it reads TDFV.

It belongs to the EF-Ts family.

It is found in the cytoplasm. Its function is as follows. Associates with the EF-Tu.GDP complex and induces the exchange of GDP to GTP. It remains bound to the aminoacyl-tRNA.EF-Tu.GTP complex up to the GTP hydrolysis stage on the ribosome. This Desulfovibrio desulfuricans (strain ATCC 27774 / DSM 6949 / MB) protein is Elongation factor Ts.